Here is a 728-residue protein sequence, read N- to C-terminus: MDNPTDSAGKCPVAHGNTPRSRSNRDWWPDQLNVQILHHNSGRADPLGQAFDYAEEFKKLHLHGLKKDLHALMTDSQDWWPADFGHYGGLFIRMAWHSAGTYRITDGRGGAGQGQQRFAPLNSWPDNANLDKARRLLWPIKQKYGNRISWADLLILTGNVALESMGFKTFGFAGGRADVWEPEELFWGPEGTWLGDERYSGERELAEPLGAVQMGFIYVNPEGPNGNSDPLASARDIRETFARMAMNDEETVALIAGGHTFGKKHGAGEPFLIGPEPEGGAIEDQGLGWKSSFGTGVGKDAITAGLEVTWSQTPTKWSNYFFENLFAFEWELTTSPAGAKQWQAKNAEASIPDAYDASKRHLPTMLTSDLALRFDPTYEKISRHFLENPGEFADAFARAWFKLTHRDMGPKVRYLGPEVPAEDLIWQDVIPAVDHPLVDDKDIAELKEKVLATGLTVQELVSTAWASASTFRGSDKRGGANGARVRLAPQKDWDANQPAQLAKVLGVLESIQKDFNAAQTGAKKISLADLIVLAGAAGVEKAAAAGGNAVSVPFTPGRIDASEAQTDAHSFAALEPRIDGFRNYLNGKRHQFMKPEEALVDRAQLLTLTGPEMTALVGGLRVLKAGAPEHGVFTSRPETLTNDFFVNLLDMGTQWVPVAGKEGFYEGRDRKTGAAKWTGTRVDLIFGSHSQLRAFAEVYGQADAKGKFVNDFVAAWNKVMNADRFDLV.

The N-terminal stretch at 1 to 16 is a signal peptide; it reads MDNPTDSAGKCPVAHG. Positions 1 to 26 are disordered; sequence MDNPTDSAGKCPVAHGNTPRSRSNRD. A cross-link (tryptophyl-tyrosyl-methioninium (Trp-Tyr) (with M-244)) is located at residues 96–218; that stretch reads WHSAGTYRIT…LGAVQMGFIY (123 aa). Catalysis depends on histidine 97, which acts as the Proton acceptor. Positions 218–244 form a cross-link, tryptophyl-tyrosyl-methioninium (Tyr-Met) (with W-96); the sequence is YVNPEGPNGNSDPLASARDIRETFARM. Residue histidine 259 coordinates heme b.

The protein belongs to the peroxidase family. Peroxidase/catalase subfamily. As to quaternary structure, homodimer or homotetramer. The cofactor is heme b. Formation of the three residue Trp-Tyr-Met cross-link is important for the catalase, but not the peroxidase activity of the enzyme.

It carries out the reaction H2O2 + AH2 = A + 2 H2O. The enzyme catalyses 2 H2O2 = O2 + 2 H2O. Functionally, bifunctional enzyme with both catalase and broad-spectrum peroxidase activity. The polypeptide is Catalase-peroxidase (Rhizobium leguminosarum bv. phaseoli).